Consider the following 123-residue polypeptide: Small ribosomal subunit protein uS13 (123 aa).

The segment at 95-123 (GLPVRGQRTKTNARTRKGPIKTVGAKRKK) is disordered.

It belongs to the universal ribosomal protein uS13 family. As to quaternary structure, part of the 30S ribosomal subunit. Forms a loose heterodimer with protein S19. Forms two bridges to the 50S subunit in the 70S ribosome.

Functionally, located at the top of the head of the 30S subunit, it contacts several helices of the 16S rRNA. In the 70S ribosome it contacts the 23S rRNA (bridge B1a) and protein L5 of the 50S subunit (bridge B1b), connecting the 2 subunits; these bridges are implicated in subunit movement. Contacts the tRNAs in the A and P-sites. This Desulfitobacterium hafniense (strain DSM 10664 / DCB-2) protein is Small ribosomal subunit protein uS13.